Consider the following 174-residue polypeptide: Peptide deformylase (174 aa).

Positions 96 and 138 each coordinate Fe cation. Glutamate 139 is a catalytic residue. Histidine 142 provides a ligand contact to Fe cation.

Belongs to the polypeptide deformylase family. Requires Fe(2+) as cofactor.

The catalysed reaction is N-terminal N-formyl-L-methionyl-[peptide] + H2O = N-terminal L-methionyl-[peptide] + formate. Its function is as follows. Removes the formyl group from the N-terminal Met of newly synthesized proteins. Requires at least a dipeptide for an efficient rate of reaction. N-terminal L-methionine is a prerequisite for activity but the enzyme has broad specificity at other positions. This Helicobacter pylori (strain P12) protein is Peptide deformylase.